The chain runs to 768 residues: Lon protease (768 aa).

The Lon N-terminal domain maps to 4–198; it reads APFLPIRDLV…RILDEIVAEM (195 aa). 349–356 is an ATP binding site; sequence GPPGIGKT. A Lon proteolytic domain is found at 586–768; sequence TGKIGVVNGL…DDVSKLVFVK (183 aa). Catalysis depends on residues Ser-674 and Lys-717.

This sequence belongs to the peptidase S16 family. Homohexamer. Organized in a ring with a central cavity.

It is found in the cytoplasm. The catalysed reaction is Hydrolysis of proteins in presence of ATP.. Functionally, ATP-dependent serine protease that mediates the selective degradation of mutant and abnormal proteins as well as certain short-lived regulatory proteins. Required for cellular homeostasis and for survival from DNA damage and developmental changes induced by stress. Degrades polypeptides processively to yield small peptide fragments that are 5 to 10 amino acids long. Binds to DNA in a double-stranded, site-specific manner. The protein is Lon protease of Fusobacterium nucleatum subsp. nucleatum (strain ATCC 25586 / DSM 15643 / BCRC 10681 / CIP 101130 / JCM 8532 / KCTC 2640 / LMG 13131 / VPI 4355).